The following is a 499-amino-acid chain: Endoglucanase (499 aa).

Positions 1 to 29 (MKRSISIFITCLLITLLTMGGMLASPASA) are cleaved as a signal peptide. Substrate contacts are provided by residues histidine 65, 69–70 (WY), tyrosine 96, and histidine 131. The active-site Proton donor is glutamate 169. Tyrosine 231 contributes to the substrate binding site. The Nucleophile role is filled by glutamate 257. Substrate-binding positions include 263 to 264 (AS), tryptophan 291, and 296 to 298 (KQE). In terms of domain architecture, CBM3 spans 350–499 (QENGISVQYR…GKLIWGTEPN (150 aa)).

It belongs to the glycosyl hydrolase 5 (cellulase A) family.

It carries out the reaction Endohydrolysis of (1-&gt;4)-beta-D-glucosidic linkages in cellulose, lichenin and cereal beta-D-glucans.. This Bacillus subtilis protein is Endoglucanase (bglC).